The following is a 626-amino-acid chain: Polypeptide N-acetylgalactosaminyltransferase 5 (626 aa).

Residues 1–11 lie on the Cytoplasmic side of the membrane; sequence MIIFKKKAILK. Residues 12 to 31 form a helical; Signal-anchor for type II membrane protein membrane-spanning segment; the sequence is VLLLVPVFWICSLIFFAATS. Asn32 carries N-linked (GlcNAc...) asparagine glycosylation. Residues 32 to 626 lie on the Lumenal side of the membrane; sequence NDSSQIGSNN…AIEHGAKPPS (595 aa). 5 cysteine pairs are disulfide-bonded: Cys165/Cys399, Cys390/Cys466, Cys502/Cys521, Cys544/Cys557, and Cys583/Cys598. The interval 174–284 is catalytic subdomain A; sequence LPRTSVIICF…EGWMEPLLDR (111 aa). 2 residues coordinate substrate: Asp215 and Arg245. Residue Asp268 participates in Mn(2+) binding. A substrate-binding site is contributed by Ser269. A Mn(2+)-binding site is contributed by His270. Residue Asn338 is glycosylated (N-linked (GlcNAc...) asparagine). Positions 345 to 407 are catalytic subdomain B; sequence PVRSPTMAGG…PCSHVGHVFR (63 aa). Trp376 contacts substrate. His404 contributes to the Mn(2+) binding site. Positions 407 and 412 each coordinate substrate. The region spanning 488–610 is the Ricin B-type lectin domain; the sequence is AKGEVRNSAV…DDPYQHWKFK (123 aa).

The protein belongs to the glycosyltransferase 2 family. GalNAc-T subfamily. The cofactor is Mn(2+).

The protein resides in the golgi apparatus membrane. It catalyses the reaction L-seryl-[protein] + UDP-N-acetyl-alpha-D-galactosamine = a 3-O-[N-acetyl-alpha-D-galactosaminyl]-L-seryl-[protein] + UDP + H(+). It carries out the reaction L-threonyl-[protein] + UDP-N-acetyl-alpha-D-galactosamine = a 3-O-[N-acetyl-alpha-D-galactosaminyl]-L-threonyl-[protein] + UDP + H(+). It functions in the pathway protein modification; protein glycosylation. In terms of biological role, catalyzes the initial reaction in O-linked oligosaccharide biosynthesis, the transfer of an N-acetyl-D-galactosamine residue to a serine or threonine residue on the protein receptor. The protein is Polypeptide N-acetylgalactosaminyltransferase 5 (gly-5) of Caenorhabditis elegans.